Consider the following 672-residue polypeptide: Rho GTPase-activating protein 40 (672 aa).

A disordered region spans residues 43 to 68 (GCSPGLSTGPTNLQQHPQKPRPADCS). A compositionally biased stretch (polar residues) spans 47–59 (GLSTGPTNLQQHP). In terms of domain architecture, Rho-GAP spans 321-519 (VPLHSLLEAD…MMVQYQDLLW (199 aa)).

Its function is as follows. GTPase activator for the Rho-type GTPases by converting them to an inactive GDP-bound state. This Mus musculus (Mouse) protein is Rho GTPase-activating protein 40.